Here is a 214-residue protein sequence, read N- to C-terminus: Adenylate kinase (214 aa).

10–15 is a binding site for ATP; sequence GAGKGT. An NMP region spans residues 30–59; sequence STGDMLRAAIKAGTELGLEAKRVMDEGKLV. AMP-binding positions include Thr31, Arg36, 57–59, 85–88, and Gln92; these read KLV and GFPR. Residues 122–159 form an LID region; the sequence is GRRVHPASGRVYHVVYNPPKVEGKDNETGDDLIVRDDD. ATP contacts are provided by residues Arg123 and 132–133; that span reads VY. The AMP site is built by Arg156 and Arg167. Arg200 serves as a coordination point for ATP.

This sequence belongs to the adenylate kinase family. In terms of assembly, monomer.

The protein resides in the cytoplasm. It catalyses the reaction AMP + ATP = 2 ADP. It participates in purine metabolism; AMP biosynthesis via salvage pathway; AMP from ADP: step 1/1. Its function is as follows. Catalyzes the reversible transfer of the terminal phosphate group between ATP and AMP. Plays an important role in cellular energy homeostasis and in adenine nucleotide metabolism. In Alteromonas mediterranea (strain DSM 17117 / CIP 110805 / LMG 28347 / Deep ecotype), this protein is Adenylate kinase.